The chain runs to 507 residues: Probable Xaa-Pro aminopeptidase ARB_01886 (507 aa).

Mn(2+)-binding residues include Asp275, Asp286, Glu434, and Glu478.

Belongs to the peptidase M24B family. Mn(2+) serves as cofactor.

It carries out the reaction Release of any N-terminal amino acid, including proline, that is linked to proline, even from a dipeptide or tripeptide.. In terms of biological role, catalyzes the removal of a penultimate prolyl residue from the N-termini of peptides. The sequence is that of Probable Xaa-Pro aminopeptidase ARB_01886 from Arthroderma benhamiae (strain ATCC MYA-4681 / CBS 112371) (Trichophyton mentagrophytes).